Consider the following 484-residue polypeptide: Cobyric acid synthase (484 aa).

In terms of domain architecture, GATase cobBQ-type spans 251 to 438 (ALKIAVPVLP…LHGLFCSDAY (188 aa)). Cys-333 serves as the catalytic Nucleophile. Residue His-430 is part of the active site.

The protein belongs to the CobB/CobQ family. CobQ subfamily.

It participates in cofactor biosynthesis; adenosylcobalamin biosynthesis. Catalyzes amidations at positions B, D, E, and G on adenosylcobyrinic A,C-diamide. NH(2) groups are provided by glutamine, and one molecule of ATP is hydrogenolyzed for each amidation. In Rhizobium rhizogenes (strain K84 / ATCC BAA-868) (Agrobacterium radiobacter), this protein is Cobyric acid synthase.